A 556-amino-acid chain; its full sequence is GEFTWKLADHPKLPKGKTIAMVVLDGWGEAKPDQYNCIHVAETPTMDSFKKTAPERWRLIKAHGTAVGLPTEDDMGNSEVGHNALGAGRIYAQGAKLVDLALASGKIYEGEGFKYVKECFDKGTLHLIGLLSDGGVHSRLDQLQLLLKGAAEHGAKRIRVHVLTDGRDVIDGTSVGFAETLEKDLENLREKGVDAQVASGGGRMYVTMDRYENDWNVVKRGWDAQVLGEAPYKFKSAVEAIKKLREEPKANDQYLPPFVIVDENGKPVGPIVDGDAVVTINFRADRMVMLAKALEYENFDTFDRVRFPKIHYAGMLQYDGELKLPSHYLVSPPEIERTSGEYLVHNGVHTFACSETVKFGHVTFFWNGNRSGYFNPEMEEYVEIPSDVGITFNVQPKMKAIEIAEKARDAILSGKFQQVRVNIPNGDMVGHTGDVEATVVGCKAADEAVKMIIDAIEQVGGIYVVTADHGNAEDMVKRDKSGKPMADKSGKIQILTSHTLQPVPIAIGGPGLTPGVRFRSDIPTGGLANVAATVMNLHGFEAPSDYEPTLIEAVDN.

Mn(2+) contacts are provided by Asp-25 and Ser-78. The active-site Phosphoserine intermediate is Ser-78. Substrate contacts are provided by residues His-137, 167 to 168, Arg-203, Arg-210, 283 to 286, and Lys-358; these read RD and RADR. Positions 427, 431, 468, 469, and 498 each coordinate Mn(2+).

This sequence belongs to the BPG-independent phosphoglycerate mutase family. In terms of assembly, monomer. Requires Mn(2+) as cofactor. Found ubiquitously in germinating seed.

Its subcellular location is the cytoplasm. The enzyme catalyses (2R)-2-phosphoglycerate = (2R)-3-phosphoglycerate. Its pathway is carbohydrate degradation; glycolysis; pyruvate from D-glyceraldehyde 3-phosphate: step 3/5. Functionally, catalyzes the interconversion of 2-phosphoglycerate and 3-phosphoglycerate. In Ricinus communis (Castor bean), this protein is 2,3-bisphosphoglycerate-independent phosphoglycerate mutase.